Consider the following 222-residue polypeptide: Putative serine proteinase inhibitor 2 homolog second part (222 aa).

The protein belongs to the serpin family. Poxviruses subfamily.

The polypeptide is Putative serine proteinase inhibitor 2 homolog second part (Homo sapiens (Human)).